We begin with the raw amino-acid sequence, 796 residues long: Protein translocase subunit SecA 2 (796 aa).

ATP-binding positions include Q84, 102-106 (GEGKT), and D496.

The protein belongs to the SecA family. In terms of assembly, monomer and homodimer. Part of the essential Sec protein translocation apparatus which comprises SecA, SecYEG and auxiliary proteins SecDF. Other proteins may also be involved.

It localises to the cell membrane. Its subcellular location is the cytoplasm. It carries out the reaction ATP + H2O + cellular proteinSide 1 = ADP + phosphate + cellular proteinSide 2.. In terms of biological role, part of the Sec protein translocase complex. Interacts with the SecYEG preprotein conducting channel. Has a central role in coupling the hydrolysis of ATP to the transfer of proteins into and across the cell membrane, serving as an ATP-driven molecular motor driving the stepwise translocation of polypeptide chains across the membrane. The protein is Protein translocase subunit SecA 2 of Staphylococcus epidermidis (strain ATCC 12228 / FDA PCI 1200).